The chain runs to 280 residues: Ribosomal protein L11 methyltransferase (280 aa).

S-adenosyl-L-methionine-binding residues include T130, G151, D172, and N213.

It belongs to the methyltransferase superfamily. PrmA family.

It is found in the cytoplasm. It carries out the reaction L-lysyl-[protein] + 3 S-adenosyl-L-methionine = N(6),N(6),N(6)-trimethyl-L-lysyl-[protein] + 3 S-adenosyl-L-homocysteine + 3 H(+). Its function is as follows. Methylates ribosomal protein L11. The chain is Ribosomal protein L11 methyltransferase from Nitratiruptor sp. (strain SB155-2).